The primary structure comprises 142 residues: Large ribosomal subunit protein uL13 (142 aa).

This sequence belongs to the universal ribosomal protein uL13 family. As to quaternary structure, part of the 50S ribosomal subunit.

Functionally, this protein is one of the early assembly proteins of the 50S ribosomal subunit, although it is not seen to bind rRNA by itself. It is important during the early stages of 50S assembly. The polypeptide is Large ribosomal subunit protein uL13 (Francisella philomiragia subsp. philomiragia (strain ATCC 25017 / CCUG 19701 / FSC 153 / O#319-036)).